A 149-amino-acid polypeptide reads, in one-letter code: Ribonuclease H (149 aa).

Residues M1–D142 form the RNase H type-1 domain. Residues D10, E48, D70, and D134 each contribute to the Mg(2+) site.

This sequence belongs to the RNase H family. In terms of assembly, monomer. Mg(2+) is required as a cofactor.

Its subcellular location is the cytoplasm. It carries out the reaction Endonucleolytic cleavage to 5'-phosphomonoester.. Its function is as follows. Endonuclease that specifically degrades the RNA of RNA-DNA hybrids. This Pseudomonas savastanoi pv. phaseolicola (strain 1448A / Race 6) (Pseudomonas syringae pv. phaseolicola (strain 1448A / Race 6)) protein is Ribonuclease H.